Reading from the N-terminus, the 286-residue chain is Putative cyclin-H (286 aa).

Residues 79–148 (AIIYIKRFYL…ILESLNFNLI (70 aa)) form the Cyclin N-terminal domain. Positions 235 to 286 (NNNNNNNNNNNNNNNNNNNNNNNNNNNNNNNNNNNNNNNNNNNNNNNNNLLL) are disordered.

This sequence belongs to the cyclin family. Cyclin C subfamily.

The protein localises to the nucleus. Its function is as follows. May regulate cdk7 involved in transcription regulation and cell cycle progression. The chain is Putative cyclin-H (cycH) from Dictyostelium discoideum (Social amoeba).